Consider the following 161-residue polypeptide: Sec-independent protein translocase protein TatB (161 aa).

A helical transmembrane segment spans residues 2 to 22; that stretch reads FNDIGALELVTLVVLAVLVFG. The tract at residues 102–161 is disordered; the sequence is DAVHGRDAESSSSGSSSGSSSAASGNGRVDMSKKPEKPEKPGKTDKPAADDRPPFDMDAT. Over residues 111 to 126 the composition is skewed to low complexity; that stretch reads SSSSGSSSGSSSAASG. Basic and acidic residues predominate over residues 131–161; the sequence is DMSKKPEKPEKPGKTDKPAADDRPPFDMDAT.

The protein belongs to the TatB family. In terms of assembly, the Tat system comprises two distinct complexes: a TatABC complex, containing multiple copies of TatA, TatB and TatC subunits, and a separate TatA complex, containing only TatA subunits. Substrates initially bind to the TatABC complex, which probably triggers association of the separate TatA complex to form the active translocon.

The protein resides in the cell membrane. In terms of biological role, part of the twin-arginine translocation (Tat) system that transports large folded proteins containing a characteristic twin-arginine motif in their signal peptide across membranes. Together with TatC, TatB is part of a receptor directly interacting with Tat signal peptides. TatB may form an oligomeric binding site that transiently accommodates folded Tat precursor proteins before their translocation. The polypeptide is Sec-independent protein translocase protein TatB (Streptomyces coelicolor (strain ATCC BAA-471 / A3(2) / M145)).